The chain runs to 311 residues: DNA replication terminus site-binding protein (311 aa).

Belongs to the Tus family.

The protein resides in the cytoplasm. Its function is as follows. Trans-acting protein required for termination of DNA replication. Binds to DNA replication terminator sequences (terA to terF) to prevent the passage of replication forks. The termination efficiency will be affected by the affinity of this protein for the terminator sequence. This Yersinia pestis protein is DNA replication terminus site-binding protein.